The following is a 368-amino-acid chain: Quinolinate synthase (368 aa).

2 residues coordinate iminosuccinate: His46 and Ser63. Cys110 contributes to the [4Fe-4S] cluster binding site. Iminosuccinate-binding positions include 141 to 143 (YVN) and Ser162. Cys230 is a binding site for [4Fe-4S] cluster. Iminosuccinate contacts are provided by residues 256–258 (HPE) and Thr273. Cys320 is a binding site for [4Fe-4S] cluster.

The protein belongs to the quinolinate synthase family. Type 3 subfamily. Homotrimer. [4Fe-4S] cluster is required as a cofactor.

The protein localises to the cytoplasm. The enzyme catalyses iminosuccinate + dihydroxyacetone phosphate = quinolinate + phosphate + 2 H2O + H(+). It participates in cofactor biosynthesis; NAD(+) biosynthesis; quinolinate from iminoaspartate: step 1/1. In terms of biological role, catalyzes the condensation of iminoaspartate with dihydroxyacetone phosphate to form quinolinate. This chain is Quinolinate synthase, found in Bacillus subtilis (strain 168).